Reading from the N-terminus, the 220-residue chain is RNA-free ribonuclease P (220 aa).

The protein belongs to the HARP family.

The enzyme catalyses Endonucleolytic cleavage of RNA, removing 5'-extranucleotides from tRNA precursor.. In terms of biological role, RNA-free RNase P that catalyzes the removal of the 5'-leader sequence from pre-tRNA to produce the mature 5'-terminus. The chain is RNA-free ribonuclease P from Methanothermobacter thermautotrophicus (strain ATCC 29096 / DSM 1053 / JCM 10044 / NBRC 100330 / Delta H) (Methanobacterium thermoautotrophicum).